We begin with the raw amino-acid sequence, 356 residues long: Probable dual-specificity RNA methyltransferase RlmN (356 aa).

Residue E100 is the Proton acceptor of the active site. The Radical SAM core domain maps to 106–340 (TNSRLTTCVS…VSLRASRGLD (235 aa)). C113 and C345 are oxidised to a cystine. Positions 120, 124, and 127 each coordinate [4Fe-4S] cluster. S-adenosyl-L-methionine-binding positions include 167–168 (GE), S197, 226–228 (SLH), and N302. C345 functions as the S-methylcysteine intermediate in the catalytic mechanism.

Belongs to the radical SAM superfamily. RlmN family. Requires [4Fe-4S] cluster as cofactor.

The protein resides in the cytoplasm. The catalysed reaction is adenosine(2503) in 23S rRNA + 2 reduced [2Fe-2S]-[ferredoxin] + 2 S-adenosyl-L-methionine = 2-methyladenosine(2503) in 23S rRNA + 5'-deoxyadenosine + L-methionine + 2 oxidized [2Fe-2S]-[ferredoxin] + S-adenosyl-L-homocysteine. The enzyme catalyses adenosine(37) in tRNA + 2 reduced [2Fe-2S]-[ferredoxin] + 2 S-adenosyl-L-methionine = 2-methyladenosine(37) in tRNA + 5'-deoxyadenosine + L-methionine + 2 oxidized [2Fe-2S]-[ferredoxin] + S-adenosyl-L-homocysteine. Functionally, specifically methylates position 2 of adenine 2503 in 23S rRNA and position 2 of adenine 37 in tRNAs. In Prochlorococcus marinus (strain MIT 9211), this protein is Probable dual-specificity RNA methyltransferase RlmN.